We begin with the raw amino-acid sequence, 1135 residues long: Large proline-rich protein bag6-A (1135 aa).

A Ubiquitin-like domain is found at 7–82 (MEVTVKTLDS…HLVERAPPQT (76 aa)). Disordered regions lie at residues 76-114 (ERAP…RNGN), 194-238 (EQAA…SPSE), 350-407 (TGNG…PHPR), 498-522 (SFQF…VPGA), 552-612 (QGGS…QHLS), 661-698 (PVST…ESLP), 1075-1099 (KATG…EAQG), and 1116-1135 (NESY…RGDP). Over residues 79–100 (PPQTQPSTGGPSTSSSTSPTSS) the composition is skewed to low complexity. The span at 212–227 (RETLPQTTQNTDGQSN) shows a compositional bias: polar residues. Residues 228–237 (TTPTSHPSPS) show a composition bias toward low complexity. Positions 367–387 (QPPSTNTSEPQRPNTENQPPS) are enriched in polar residues. Low complexity-rich tracts occupy residues 555-600 (SSTS…SVPS) and 663-672 (STAPTQSASQ). Pro residues predominate over residues 673 to 692 (APPPSSPPPPPAHSSPPPAA). The span at 1087 to 1099 (CVRRELDNSEAQG) shows a compositional bias: basic and acidic residues. Residues 1116-1129 (NESYSAQRFPNTQR) show a composition bias toward polar residues.

As to quaternary structure, component of the bag6/bat3 complex.

The protein localises to the cytoplasm. It is found in the cytosol. The protein resides in the nucleus. It localises to the secreted. Its subcellular location is the extracellular exosome. In terms of biological role, ATP-independent molecular chaperone preventing the aggregation of misfolded and hydrophobic patches-containing proteins. Functions as part of a cytosolic protein quality control complex, the bag6/bat3 complex, which maintains these client proteins in a soluble state and participates in their proper delivery to the endoplasmic reticulum or alternatively can promote their sorting to the proteasome where they undergo degradation. The bag6/bat3 complex is involved in the post-translational delivery of tail-anchored/type II transmembrane proteins to the endoplasmic reticulum membrane. Similarly, the bag6/bat3 complex also functions as a sorting platform for proteins of the secretory pathway that are mislocalized to the cytosol either delivering them to the proteasome for degradation or to the endoplasmic reticulum. The bag6/bat3 complex also plays a role in the endoplasmic reticulum-associated degradation (ERAD), a quality control mechanism that eliminates unwanted proteins of the endoplasmic reticulum through their retrotranslocation to the cytosol and their targeting to the proteasome. It maintains these retrotranslocated proteins in an unfolded yet soluble state condition in the cytosol to ensure their proper delivery to the proteasome. Also required for selective ubiquitin-mediated degradation of defective nascent chain polypeptides by the proteasome. Also involved in endoplasmic reticulum stress-induced pre-emptive quality control, a mechanism that selectively attenuates the translocation of newly synthesized proteins into the endoplasmic reticulum and reroutes them to the cytosol for proteasomal degradation. May ensure the proper degradation of these proteins and thereby protects the endoplasmic reticulum from protein overload upon stress. By stabilizing a large spectrum of proteins, may indirectly affect different biological processes including apoptosis. By controlling the steady-state expression of the IGF1R receptor, indirectly regulates the insulin-like growth factor receptor signaling pathway. Its function is as follows. When nuclear, may also act as a component of some chromatin regulator complex. The chain is Large proline-rich protein bag6-A from Xenopus laevis (African clawed frog).